The chain runs to 419 residues: MGMTMTQKILASHAGLESVKAGQLIEVNLDLVLGNDITTPVAINEFKKFGVDKVFNKSQIAIVPDHFTPNKDIKAAEQVKYVREFSNKMGIENFFEVGEMGIEHCLLPEKGLVVAGDVVIGADSHTCTYGALGAFSTGIGSTDMAAGMATGQTWFKVPSAIKFILKNKPAKWVSGKDIILHIIGMIGVDGALYKSMEFVGDGLNYLSMDDRFTMANMAIEAGGKNGIFPVDDKTVEYLKEHTEKEWKIYEADEDAEYDEVIEIDLSTLKPTVSFPHLPDNTRTIDNANRVNIDQVVIGSCTNGRISDLRIARGILKGKKVKKGIRCIVIPGTQKIYLQALEEGIIKDLIEAGAVVSTPTCGPCLGGHMGILAKGERCVSTTNRNFVGRMGHVESEVYLASPAVAAASALTGKITDPELV.

[4Fe-4S] cluster contacts are provided by Cys300, Cys360, and Cys363.

Belongs to the aconitase/IPM isomerase family. LeuC type 2 subfamily. As to quaternary structure, heterodimer of LeuC and LeuD. The cofactor is [4Fe-4S] cluster.

It carries out the reaction (2R,3S)-3-isopropylmalate = (2S)-2-isopropylmalate. Its pathway is amino-acid biosynthesis; L-leucine biosynthesis; L-leucine from 3-methyl-2-oxobutanoate: step 2/4. In terms of biological role, catalyzes the isomerization between 2-isopropylmalate and 3-isopropylmalate, via the formation of 2-isopropylmaleate. This Clostridium botulinum (strain Alaska E43 / Type E3) protein is 3-isopropylmalate dehydratase large subunit.